Reading from the N-terminus, the 271-residue chain is Large ribosomal subunit protein uL2cz/uL2cy (271 aa).

2 disordered regions span residues 1-22 (MAKH…DRQV) and 223-271 (PVDH…RRRK).

Belongs to the universal ribosomal protein uL2 family. Part of the 50S ribosomal subunit.

Its subcellular location is the plastid. It localises to the chloroplast. The polypeptide is Large ribosomal subunit protein uL2cz/uL2cy (rpl2-A) (Sorghum bicolor (Sorghum)).